A 376-amino-acid polypeptide reads, in one-letter code: N-acetyldiaminopimelate deacetylase (376 aa).

The active site involves Asp-69. Glu-128 serves as the catalytic Proton acceptor.

Belongs to the peptidase M20A family. N-acetyldiaminopimelate deacetylase subfamily.

The enzyme catalyses N-acetyl-(2S,6S)-2,6-diaminopimelate + H2O = (2S,6S)-2,6-diaminopimelate + acetate. It participates in amino-acid biosynthesis; L-lysine biosynthesis via DAP pathway; LL-2,6-diaminopimelate from (S)-tetrahydrodipicolinate (acetylase route): step 3/3. Its function is as follows. Catalyzes the conversion of N-acetyl-diaminopimelate to diaminopimelate and acetate. This chain is N-acetyldiaminopimelate deacetylase, found in Streptococcus pneumoniae (strain P1031).